The chain runs to 229 residues: Potassium/proton antiporter CemA (229 aa).

3 helical membrane-spanning segments follow: residues 6–26 (AFIP…ISLC), 107–127 (ILHF…SFWG), and 189–209 (ILSG…KYWI).

This sequence belongs to the CemA family.

Its subcellular location is the plastid. It is found in the chloroplast inner membrane. The catalysed reaction is K(+)(in) + H(+)(out) = K(+)(out) + H(+)(in). In terms of biological role, contributes to K(+)/H(+) antiport activity by supporting proton efflux to control proton extrusion and homeostasis in chloroplasts in a light-dependent manner to modulate photosynthesis. Prevents excessive induction of non-photochemical quenching (NPQ) under continuous-light conditions. Indirectly promotes efficient inorganic carbon uptake into chloroplasts. The polypeptide is Potassium/proton antiporter CemA (Olimarabidopsis pumila (Dwarf rocket)).